A 229-amino-acid polypeptide reads, in one-letter code: Aspartate-rich protein 1 (229 aa).

A disordered region spans residues 84 to 106 (SEEDNDDAKILPSPVQGSSEDNL).

The chain is Aspartate-rich protein 1 (DRICH1) from Homo sapiens (Human).